The chain runs to 494 residues: Ketol-acid reductoisomerase (NADP(+)) (494 aa).

The KARI N-terminal Rossmann domain maps to 14 to 208; it reads LDQLGRCRFM…GGHRAGCLES (195 aa). NADP(+) contacts are provided by residues 45-48, Arg68, Arg76, Ser78, and 108-110; these read CGAQ and DKQ. His132 is an active-site residue. Position 158 (Gly158) interacts with NADP(+). KARI C-terminal knotted domains lie at 209–344 and 345–487; these read SFVA…NYPD and SSLE…MTDM. Residues Asp217, Glu221, Glu389, and Glu393 each coordinate Mg(2+). A substrate-binding site is contributed by Ser414.

It belongs to the ketol-acid reductoisomerase family. The cofactor is Mg(2+).

The catalysed reaction is (2R)-2,3-dihydroxy-3-methylbutanoate + NADP(+) = (2S)-2-acetolactate + NADPH + H(+). The enzyme catalyses (2R,3R)-2,3-dihydroxy-3-methylpentanoate + NADP(+) = (S)-2-ethyl-2-hydroxy-3-oxobutanoate + NADPH + H(+). It functions in the pathway amino-acid biosynthesis; L-isoleucine biosynthesis; L-isoleucine from 2-oxobutanoate: step 2/4. Its pathway is amino-acid biosynthesis; L-valine biosynthesis; L-valine from pyruvate: step 2/4. Functionally, involved in the biosynthesis of branched-chain amino acids (BCAA). Catalyzes an alkyl-migration followed by a ketol-acid reduction of (S)-2-acetolactate (S2AL) to yield (R)-2,3-dihydroxy-isovalerate. In the isomerase reaction, S2AL is rearranged via a Mg-dependent methyl migration to produce 3-hydroxy-3-methyl-2-ketobutyrate (HMKB). In the reductase reaction, this 2-ketoacid undergoes a metal-dependent reduction by NADPH to yield (R)-2,3-dihydroxy-isovalerate. The polypeptide is Ketol-acid reductoisomerase (NADP(+)) (Aliivibrio salmonicida (strain LFI1238) (Vibrio salmonicida (strain LFI1238))).